The primary structure comprises 626 residues: Solute carrier family 13 member 4 (626 aa).

The next 4 helical transmembrane spans lie at 13-33, 52-72, 77-97, and 113-133; these read LLLV…HPSS, AVPL…FGVL, VAAE…CVAA, and VLMA…CTTL. The segment covering 217–228 has biased composition (polar residues); sequence SITNPIKTANQH. Residues 217 to 252 form a disordered region; that stretch reads SITNPIKTANQHQGKKQHPSQEKPQVLTPSPRKQKL. The next 8 helical transmembrane spans lie at 274-294, 309-329, 372-392, 414-434, 466-486, 499-519, 543-563, and 590-610; these read YSAT…LIFL, FGTW…VSWF, ISYP…LWFT, ATVS…KPCF, IVIL…SGLS, LPPW…TEFV, PLYT…LPVG, and VIGL…LFHL.

The protein belongs to the SLC13A/DASS transporter (TC 2.A.47) family. NADC subfamily. Highly expressed in placenta and testis with intermediate levels in brain and lower levels in heart, thymus and liver.

The protein resides in the membrane. The enzyme catalyses sulfate(out) + 3 Na(+)(out) = sulfate(in) + 3 Na(+)(in). Its activity is regulated as follows. Transport is inhibited by thiosulfate, phosphate, molybdate, selenate and tungstate. Not inhibited by oxalate, citrate, succinate, phenol red or 4,4'-diisothiocyanostilbene-2,2'-disulfonic acid (DIDS). Functionally, sodium:sulfate symporter that mediates sulfate reabsorption in the high endothelial venules (HEV). The polypeptide is Solute carrier family 13 member 4 (SLC13A4) (Homo sapiens (Human)).